A 292-amino-acid chain; its full sequence is ATP synthase gamma chain (292 aa).

The protein belongs to the ATPase gamma chain family. As to quaternary structure, F-type ATPases have 2 components, CF(1) - the catalytic core - and CF(0) - the membrane proton channel. CF(1) has five subunits: alpha(3), beta(3), gamma(1), delta(1), epsilon(1). CF(0) has three main subunits: a, b and c.

Its subcellular location is the cell inner membrane. Functionally, produces ATP from ADP in the presence of a proton gradient across the membrane. The gamma chain is believed to be important in regulating ATPase activity and the flow of protons through the CF(0) complex. The protein is ATP synthase gamma chain of Brucella canis (strain ATCC 23365 / NCTC 10854 / RM-666).